Consider the following 616-residue polypeptide: Dihydroxy-acid dehydratase 1 (616 aa).

Position 81 (aspartate 81) interacts with Mg(2+). Cysteine 122 lines the [2Fe-2S] cluster pocket. The Mg(2+) site is built by aspartate 123 and lysine 124. Lysine 124 carries the post-translational modification N6-carboxylysine. Residue cysteine 195 coordinates [2Fe-2S] cluster. Glutamate 491 lines the Mg(2+) pocket. Catalysis depends on serine 517, which acts as the Proton acceptor.

It belongs to the IlvD/Edd family. In terms of assembly, homodimer. [2Fe-2S] cluster is required as a cofactor. It depends on Mg(2+) as a cofactor.

It catalyses the reaction (2R)-2,3-dihydroxy-3-methylbutanoate = 3-methyl-2-oxobutanoate + H2O. The enzyme catalyses (2R,3R)-2,3-dihydroxy-3-methylpentanoate = (S)-3-methyl-2-oxopentanoate + H2O. It participates in amino-acid biosynthesis; L-isoleucine biosynthesis; L-isoleucine from 2-oxobutanoate: step 3/4. The protein operates within amino-acid biosynthesis; L-valine biosynthesis; L-valine from pyruvate: step 3/4. Its function is as follows. Functions in the biosynthesis of branched-chain amino acids. Catalyzes the dehydration of (2R,3R)-2,3-dihydroxy-3-methylpentanoate (2,3-dihydroxy-3-methylvalerate) into 2-oxo-3-methylpentanoate (2-oxo-3-methylvalerate) and of (2R)-2,3-dihydroxy-3-methylbutanoate (2,3-dihydroxyisovalerate) into 2-oxo-3-methylbutanoate (2-oxoisovalerate), the penultimate precursor to L-isoleucine and L-valine, respectively. The sequence is that of Dihydroxy-acid dehydratase 1 from Bradyrhizobium diazoefficiens (strain JCM 10833 / BCRC 13528 / IAM 13628 / NBRC 14792 / USDA 110).